A 236-amino-acid polypeptide reads, in one-letter code: Proteasome subunit alpha (236 aa).

The protein belongs to the peptidase T1A family. The 20S proteasome core is composed of 14 alpha and 14 beta subunits that assemble into four stacked heptameric rings, resulting in a barrel-shaped structure. The two inner rings, each composed of seven catalytic beta subunits, are sandwiched by two outer rings, each composed of seven alpha subunits. The catalytic chamber with the active sites is on the inside of the barrel. Has a gated structure, the ends of the cylinder being occluded by the N-termini of the alpha-subunits. Is capped by the proteasome-associated ATPase, ARC.

The protein localises to the cytoplasm. The protein operates within protein degradation; proteasomal Pup-dependent pathway. Its activity is regulated as follows. The formation of the proteasomal ATPase ARC-20S proteasome complex, likely via the docking of the C-termini of ARC into the intersubunit pockets in the alpha-rings, may trigger opening of the gate for substrate entry. Interconversion between the open-gate and close-gate conformations leads to a dynamic regulation of the 20S proteasome proteolysis activity. In terms of biological role, component of the proteasome core, a large protease complex with broad specificity involved in protein degradation. In Pseudarthrobacter chlorophenolicus (strain ATCC 700700 / DSM 12829 / CIP 107037 / JCM 12360 / KCTC 9906 / NCIMB 13794 / A6) (Arthrobacter chlorophenolicus), this protein is Proteasome subunit alpha.